Here is a 132-residue protein sequence, read N- to C-terminus: Ribonuclease P protein component 4 (132 aa).

Residues cysteine 67, cysteine 70, cysteine 96, and cysteine 99 each coordinate Zn(2+).

It belongs to the eukaryotic/archaeal RNase P protein component 4 family. In terms of assembly, consists of a catalytic RNA component and at least 4-5 protein subunits. Zn(2+) serves as cofactor.

It localises to the cytoplasm. The enzyme catalyses Endonucleolytic cleavage of RNA, removing 5'-extranucleotides from tRNA precursor.. Its function is as follows. Part of ribonuclease P, a protein complex that generates mature tRNA molecules by cleaving their 5'-ends. The polypeptide is Ribonuclease P protein component 4 (Thermococcus kodakarensis (strain ATCC BAA-918 / JCM 12380 / KOD1) (Pyrococcus kodakaraensis (strain KOD1))).